An 813-amino-acid polypeptide reads, in one-letter code: Immunoglobulin superfamily DCC subclass member 3 (813 aa).

A disordered region spans residues 1-21 (MAEPRTASPRRLPALRRPGFL). The signal sequence occupies residues 1–47 (MAEPRTASPRRLPALRRPGFLPPLLPPPPPPLLLLLLLLPLPAPSLG). A compositionally biased stretch (low complexity) spans 9-19 (PRRLPALRRPG). Ig-like C2-type domains follow at residues 49–151 (GHSA…ATMS), 151–232 (SDFH…VRVS), 250–333 (PTIL…RTAQ), and 341–428 (PAEF…ARLT). 2 disulfides stabilise this stretch: Cys-75–Cys-129 and Cys-172–Cys-221. N-linked (GlcNAc...) asparagine glycosylation is present at Asn-105. N-linked (GlcNAc...) asparagine glycosylation is present at Asn-258. 2 disulfide bridges follow: Cys-271–Cys-319 and Cys-363–Cys-412. N-linked (GlcNAc...) asparagine glycans are attached at residues Asn-393 and Asn-394. Fibronectin type-III domains lie at 438-532 (PPRN…TLGE) and 535-630 (VPPP…ASER). Residues Asn-592, Asn-616, and Asn-646 are each glycosylated (N-linked (GlcNAc...) asparagine). Residues 653–673 (IVIGIHIGVTCIIFCVLFLLF) form a helical membrane-spanning segment. 2 disordered regions span residues 689–724 (LSPPQGPRSQRDPGILALNGLSRGEGGQLSRDEKPV) and 775–813 (TTEATSPCAGPGPVPAPQDIGPVPLSEGQTQPPAVAAPQ).

The protein belongs to the immunoglobulin superfamily. DCC family. In terms of tissue distribution, detected in cerebellum, kidney, heart, lung, skeletal muscle and spleen.

It localises to the membrane. The chain is Immunoglobulin superfamily DCC subclass member 3 (Igdcc3) from Mus musculus (Mouse).